The following is an 83-amino-acid chain: ATP synthase subunit c, chloroplastic (83 aa).

Transmembrane regions (helical) follow at residues 3 to 23 (PLIAASSVIAAGLAIGLAAIG) and 57 to 77 (FAFMESLTIYGLVVALALLFA).

It belongs to the ATPase C chain family. In terms of assembly, F-type ATPases have 2 components, F(1) - the catalytic core - and F(0) - the membrane proton channel. F(1) has five subunits: alpha(3), beta(3), gamma(1), delta(1), epsilon(1). F(0) has four main subunits: a(1), b(1), b'(1) and c(10-14). The alpha and beta chains form an alternating ring which encloses part of the gamma chain. F(1) is attached to F(0) by a central stalk formed by the gamma and epsilon chains, while a peripheral stalk is formed by the delta, b and b' chains.

The protein resides in the plastid. Its subcellular location is the chloroplast thylakoid membrane. F(1)F(0) ATP synthase produces ATP from ADP in the presence of a proton or sodium gradient. F-type ATPases consist of two structural domains, F(1) containing the extramembraneous catalytic core and F(0) containing the membrane proton channel, linked together by a central stalk and a peripheral stalk. During catalysis, ATP synthesis in the catalytic domain of F(1) is coupled via a rotary mechanism of the central stalk subunits to proton translocation. In terms of biological role, key component of the F(0) channel; it plays a direct role in translocation across the membrane. A homomeric c-ring of between 10-14 subunits forms the central stalk rotor element with the F(1) delta and epsilon subunits. In Oedogonium cardiacum (Filamentous green alga), this protein is ATP synthase subunit c, chloroplastic.